Consider the following 244-residue polypeptide: U11/U12 small nuclear ribonucleoprotein 35 kDa protein (244 aa).

Residues 51-129 (LTLFVARLNL…HEIFVDYELE (79 aa)) form the RRM domain. Residues 146-162 (GKKESGQLRFGGRDRPF) are compositionally biased toward basic and acidic residues. The interval 146 to 244 (GKKESGQLRF…KSRDKRDRSK (99 aa)) is disordered. Lys172 participates in a covalent cross-link: Glycyl lysine isopeptide (Lys-Gly) (interchain with G-Cter in SUMO2). Composition is skewed to basic and acidic residues over residues 173 to 185 (NEPH…ERRE) and 192 to 244 (RHWD…DRSK).

As to quaternary structure, component of the U11/U12 snRNPs that are part of the U12-type spliceosome.

Its subcellular location is the nucleus. The protein is U11/U12 small nuclear ribonucleoprotein 35 kDa protein (Snrnp35) of Mus musculus (Mouse).